A 399-amino-acid chain; its full sequence is Chromosomal replication initiator protein DnaA (399 aa).

Residues 1-64 (MELNALIKKI…EEEVRKLIEV (64 aa)) are domain I, interacts with DnaA modulators. Residues 64–77 (VKEKEEKKKVEIKD) form a domain II region. Residues 78–290 (FLNPKYTLEN…GKIKLIKLKG (213 aa)) form a domain III, AAA+ region region. The ADP site is built by Ile89, Asn94, Gly122, Thr123, Gly124, Lys125, Thr126, and His127. Ile89 provides a ligand contact to ATP. Position 122 (Gly122) interacts with ATP. Positions 124, 125, 126, and 127 each coordinate ATP. Position 126 (Thr126) interacts with Mg(2+). Val156 is a ssDNA binding site. Residue Asp180 coordinates ATP. Asp181 is a Mg(2+) binding site. Residues Lys188, Arg190, and Thr191 each coordinate ssDNA. Arg277 contributes to the ATP binding site. The interval 291–399 (FEGLERKERK…LEKQAFDKIC (109 aa)) is domain IV, binds dsDNA.

This sequence belongs to the DnaA family. As to quaternary structure, in the presence of ATP analog AMP-PCP forms a linear, right-handed spiral filament with 4 subunits arranged head-to-tail, about 122 Angstroms wide and about 360 Angstroms long. Mg(2+)-AMP-PCP binds at the subunit interface with the gamma phosphate coordinated by adjacent subunits. dsDNA probably wraps on the outside of the filament. ssDNA binds to the center of the helical filament via the AAA+ domain, which stretches the DNA.

It is found in the cytoplasm. Its function is as follows. Plays an essential role in the initiation and regulation of chromosomal replication. ATP-DnaA binds to the origin of replication (oriC) to initiate formation of the DNA replication initiation complex once per cell cycle. Binds the DnaA box (a 9 base pair repeat at the origin) and separates the double-stranded (ds)DNA. Forms a right-handed helical filament on oriC DNA; dsDNA binds to the exterior of the filament while single-stranded (ss)DNA is stabiized in the filament's interior. The ATP-DnaA-oriC complex binds and stabilizes one strand of the AT-rich DNA unwinding element (DUE), permitting loading of DNA polymerase. After initiation quickly degrades to an ADP-DnaA complex that is not apt for DNA replication. Binds acidic phospholipids. In terms of biological role, able to melt short unstable dsDNA (15-mer with melting temperature, TM, 43 degrees Celsius) in the presence of a non-hydrolyzable ATP analog; a more stable dsDNA (20-mer, TM 55 degrees Celsius) is poor substrate. ADP does not support dsDNA melting. Addition of DnaA-AMP-PCP (an ATP analog, beta,gamma-methyleneadenosine 5'-triphosphate) to an oric-containing plasmid causes a DNA shift to more positively supercoiled topological species, stabilizing a positive wrap and right-handed filament as seen in the crystal structure without DNA. Filament formation generated by positive supercoiling may destabilize the origin unwinding element through compensatory negative supercoiling strain. The chain is Chromosomal replication initiator protein DnaA from Aquifex aeolicus (strain VF5).